We begin with the raw amino-acid sequence, 757 residues long: 5-methyltetrahydropteroyltriglutamate--homocysteine methyltransferase (757 aa).

Residues arginine 15 to lysine 18 and lysine 114 each bind 5-methyltetrahydropteroyltri-L-glutamate. Residues isoleucine 428–serine 430 and glutamate 481 contribute to the L-homocysteine site. Residues isoleucine 428 to serine 430 and glutamate 481 contribute to the L-methionine site. 5-methyltetrahydropteroyltri-L-glutamate is bound by residues arginine 512 to cysteine 513 and tryptophan 558. Residue aspartate 596 participates in L-homocysteine binding. Aspartate 596 provides a ligand contact to L-methionine. Glutamate 602 contacts 5-methyltetrahydropteroyltri-L-glutamate. Residues histidine 639, cysteine 641, and glutamate 663 each contribute to the Zn(2+) site. Histidine 692 acts as the Proton donor in catalysis. Position 724 (cysteine 724) interacts with Zn(2+).

The protein belongs to the vitamin-B12 independent methionine synthase family. The cofactor is Zn(2+).

The catalysed reaction is 5-methyltetrahydropteroyltri-L-glutamate + L-homocysteine = tetrahydropteroyltri-L-glutamate + L-methionine. It functions in the pathway amino-acid biosynthesis; L-methionine biosynthesis via de novo pathway; L-methionine from L-homocysteine (MetE route): step 1/1. Its function is as follows. Catalyzes the transfer of a methyl group from 5-methyltetrahydrofolate to homocysteine resulting in methionine formation. This chain is 5-methyltetrahydropteroyltriglutamate--homocysteine methyltransferase, found in Lactococcus lactis subsp. cremoris (strain SK11).